We begin with the raw amino-acid sequence, 798 residues long: METGPAPLVAPPRRHGAPAAPSPPPRGSRAGSHLVVEPGPPVTTATSAPVELVAPGEARPACVPGSSQTSASTPTTATSSTVVMLTLEASPEAAKTQEFPAPAAETGAETSVALALGTDTQKTEEVRASPVPGPGTPTRTPSRMAPGALTAKPPLAPKPGTTVASGVTARGGVGQVAGGHEAATSASAGSVPEDPSGPVTGPPGTCEAPAPTPVAVVTVTPAPEPVENFQDLGSTSSLGPGISGPRGQAPDTLSYLDSVSLMSGTLESLPDDVSSMGSDSEINGMALRKTDKYGFLGGSQYSGSLESSIPVDVARQRELKWLEMFSNWDKWLSRRFQKVKLRCRKGIPSSLRAKAWQYLSNSKELLEQNPGKFEELERAAGDPKWLDVIEKDLHRQFPFHEMFAARGGHGQQDLYRILKAYTIYRPDEGYCQAQAPVAAVLLMHMPAEQAFWCLVQICDKYLPGYYSAGLEAIQLDGEIFFALLRRVSPLAHRHLRRQRIDPVLYMTEWFMCIFARTLPWASVLRVWDMFFCEGVKIIFRVALVLLRHTLGSVEKLRSCQGMYETMEQLRNLPQQCMQEDFLVHEVTNLPVTEAWIERENAAQLKKWRETRGELQYRPSRRLHGSRAIHEERRRQQPPLGPSSSLLSLPSLKSRGSRAVGGAPSPPPPVRRASAGPVPGAVVIAEGLHPSLPSPTGNSTPLGTSKEIRRQEKERQKQEKDREKERQRQEKERERQEKERQKWEKEQEKEQQKQEKERQKLEKKGQGRKLSLRRRADGPPASHDGGDRSAAEARQDAYF.

Disordered stretches follow at residues 1-79 (METG…TATS), 118-211 (TDTQ…APAP), and 225-250 (PVENFQDLGSTSSLGPGISGPRGQAP). Position 22 is a phosphoserine (S22). Residues 66 to 79 (SSQTSASTPTTATS) are compositionally biased toward low complexity. Phosphoserine is present on S129. The residue at position 136 (T136) is a Phosphothreonine. The segment covering 136 to 161 (TPTRTPSRMAPGALTAKPPLAPKPGT) has biased composition (low complexity). The residue at position 170 (R170) is an Omega-N-methylarginine. The region spanning 346–534 (GIPSSLRAKA…RVWDMFFCEG (189 aa)) is the Rab-GAP TBC domain. The interval 618–798 (PSRRLHGSRA…AAEARQDAYF (181 aa)) is disordered. Residues 641–662 (PSSSLLSLPSLKSRGSRAVGGA) show a composition bias toward low complexity. S644, S647, S650, S664, and S673 each carry phosphoserine. Polar residues predominate over residues 693-702 (SPTGNSTPLG). Residues 702–769 (GTSKEIRRQE…LEKKGQGRKL (68 aa)) adopt a coiled-coil conformation. Basic and acidic residues-rich tracts occupy residues 705–764 (KEIR…EKKG) and 783–798 (DGGDRSAAEARQDAYF).

Its subcellular location is the cytoplasm. Acts as a GTPase-activating protein for RAB3A, RAB22A, RAB27A and RAB35. Does not act on RAB2A and RAB6A. In Mus musculus (Mouse), this protein is TBC1 domain family member 10B (Tbc1d10b).